Consider the following 375-residue polypeptide: F420-dependent formate dehydrogenase 2 subunit beta (375 aa).

4Fe-4S ferredoxin-type domains lie at 268–291 and 320–349; these read PEPEKWDEYWSRCIKCYGCRDVCP and IRLSHMSFSCINCGQCEDVCPVEIPLAKIY. Cys280, Cys283, Cys286, Cys290, Cys329, Cys332, Cys335, and Cys339 together coordinate [4Fe-4S] cluster.

The protein belongs to the FrhB family. Dimer of an alpha (FdhA2) and a beta (FdhB2) subunit. [4Fe-4S] cluster serves as cofactor. It depends on FAD as a cofactor. Requires Zn(2+) as cofactor.

It carries out the reaction oxidized coenzyme F420-(gamma-L-Glu)(n) + formate + 2 H(+) = reduced coenzyme F420-(gamma-L-Glu)(n) + CO2. Functionally, catalyzes the oxidation of formate to carbon dioxide, with coenzyme F420 as the electron acceptor. In vitro can also use methyl viologen as electron acceptor. In Methanococcus maripaludis (strain DSM 14266 / JCM 13030 / NBRC 101832 / S2 / LL), this protein is F420-dependent formate dehydrogenase 2 subunit beta.